Reading from the N-terminus, the 359-residue chain is Holliday junction branch migration complex subunit RuvB (359 aa).

The tract at residues 1-187 is large ATPase domain (RuvB-L); the sequence is MSGLEHGDAS…FGFTAHLEFY (187 aa). ATP is bound by residues leucine 26, arginine 27, glycine 68, lysine 71, threonine 72, threonine 73, 134–136, arginine 177, tyrosine 187, and arginine 224; that span reads EDY. Mg(2+) is bound at residue threonine 72. The tract at residues 188–257 is small ATPAse domain (RuvB-S); the sequence is ETHELEQVIE…SVRAALDLYD (70 aa). Positions 260–359 are head domain (RuvB-H); it reads PLGLDRLDRA…VAGALFGDEL (100 aa). Residues arginine 315 and arginine 320 each contribute to the DNA site.

Belongs to the RuvB family. Homohexamer. Forms an RuvA(8)-RuvB(12)-Holliday junction (HJ) complex. HJ DNA is sandwiched between 2 RuvA tetramers; dsDNA enters through RuvA and exits via RuvB. An RuvB hexamer assembles on each DNA strand where it exits the tetramer. Each RuvB hexamer is contacted by two RuvA subunits (via domain III) on 2 adjacent RuvB subunits; this complex drives branch migration. In the full resolvosome a probable DNA-RuvA(4)-RuvB(12)-RuvC(2) complex forms which resolves the HJ.

The protein resides in the cytoplasm. It carries out the reaction ATP + H2O = ADP + phosphate + H(+). Functionally, the RuvA-RuvB-RuvC complex processes Holliday junction (HJ) DNA during genetic recombination and DNA repair, while the RuvA-RuvB complex plays an important role in the rescue of blocked DNA replication forks via replication fork reversal (RFR). RuvA specifically binds to HJ cruciform DNA, conferring on it an open structure. The RuvB hexamer acts as an ATP-dependent pump, pulling dsDNA into and through the RuvAB complex. RuvB forms 2 homohexamers on either side of HJ DNA bound by 1 or 2 RuvA tetramers; 4 subunits per hexamer contact DNA at a time. Coordinated motions by a converter formed by DNA-disengaged RuvB subunits stimulates ATP hydrolysis and nucleotide exchange. Immobilization of the converter enables RuvB to convert the ATP-contained energy into a lever motion, pulling 2 nucleotides of DNA out of the RuvA tetramer per ATP hydrolyzed, thus driving DNA branch migration. The RuvB motors rotate together with the DNA substrate, which together with the progressing nucleotide cycle form the mechanistic basis for DNA recombination by continuous HJ branch migration. Branch migration allows RuvC to scan DNA until it finds its consensus sequence, where it cleaves and resolves cruciform DNA. This Clavibacter michiganensis subsp. michiganensis (strain NCPPB 382) protein is Holliday junction branch migration complex subunit RuvB.